The chain runs to 380 residues: Alcohol dehydrogenase 1 (380 aa).

Zn(2+) is bound by residues cysteine 48, threonine 50, histidine 70, cysteine 100, cysteine 103, cysteine 106, cysteine 114, and cysteine 178. 2 residues coordinate an alcohol: threonine 50 and histidine 70. NAD(+) is bound at residue threonine 50. NAD(+) is bound by residues glycine 203 to glycine 208, aspartate 227, arginine 232, threonine 273, valine 296, valine 296 to valine 298, and arginine 373.

Belongs to the zinc-containing alcohol dehydrogenase family. As to quaternary structure, homodimer. Zn(2+) serves as cofactor.

It localises to the cytoplasm. The enzyme catalyses a primary alcohol + NAD(+) = an aldehyde + NADH + H(+). It carries out the reaction a secondary alcohol + NAD(+) = a ketone + NADH + H(+). The chain is Alcohol dehydrogenase 1 from Pisum sativum (Garden pea).